The primary structure comprises 428 residues: Serine--tRNA ligase (428 aa).

Position 231 to 233 (231 to 233 (TSE)) interacts with L-serine. Residues 262-264 (RRE) and Val-278 contribute to the ATP site. Residue Glu-285 participates in L-serine binding. Position 349–352 (349–352 (ELTS)) interacts with ATP. Residue Thr-384 coordinates L-serine.

Belongs to the class-II aminoacyl-tRNA synthetase family. Type-1 seryl-tRNA synthetase subfamily. In terms of assembly, homodimer. The tRNA molecule binds across the dimer.

It is found in the cytoplasm. It catalyses the reaction tRNA(Ser) + L-serine + ATP = L-seryl-tRNA(Ser) + AMP + diphosphate + H(+). It carries out the reaction tRNA(Sec) + L-serine + ATP = L-seryl-tRNA(Sec) + AMP + diphosphate + H(+). It functions in the pathway aminoacyl-tRNA biosynthesis; selenocysteinyl-tRNA(Sec) biosynthesis; L-seryl-tRNA(Sec) from L-serine and tRNA(Sec): step 1/1. Catalyzes the attachment of serine to tRNA(Ser). Is also able to aminoacylate tRNA(Sec) with serine, to form the misacylated tRNA L-seryl-tRNA(Sec), which will be further converted into selenocysteinyl-tRNA(Sec). This chain is Serine--tRNA ligase, found in Bifidobacterium animalis subsp. lactis (strain AD011).